Here is a 205-residue protein sequence, read N- to C-terminus: Large ribosomal subunit protein uL13 (205 aa).

The protein belongs to the universal ribosomal protein uL13 family.

The polypeptide is Large ribosomal subunit protein uL13 (RpL13A) (Drosophila melanogaster (Fruit fly)).